The following is a 329-amino-acid chain: Ferredoxin--NADP reductase (329 aa).

Positions 28, 36, 41, 81, 115, 282, and 323 each coordinate FAD.

It belongs to the ferredoxin--NADP reductase type 2 family. As to quaternary structure, homodimer. It depends on FAD as a cofactor.

The enzyme catalyses 2 reduced [2Fe-2S]-[ferredoxin] + NADP(+) + H(+) = 2 oxidized [2Fe-2S]-[ferredoxin] + NADPH. This Anaplasma marginale (strain St. Maries) protein is Ferredoxin--NADP reductase.